A 484-amino-acid chain; its full sequence is Glutamate--tRNA ligase (484 aa).

Positions 11–21 (PSPTGLLHIGN) match the 'HIGH' region motif. The 'KMSKS' region motif lies at 255–259 (KLSKR). Position 258 (Lys-258) interacts with ATP.

This sequence belongs to the class-I aminoacyl-tRNA synthetase family. Glutamate--tRNA ligase type 1 subfamily. In terms of assembly, monomer.

The protein resides in the cytoplasm. It catalyses the reaction tRNA(Glu) + L-glutamate + ATP = L-glutamyl-tRNA(Glu) + AMP + diphosphate. Catalyzes the attachment of glutamate to tRNA(Glu) in a two-step reaction: glutamate is first activated by ATP to form Glu-AMP and then transferred to the acceptor end of tRNA(Glu). The polypeptide is Glutamate--tRNA ligase (Streptococcus agalactiae serotype Ia (strain ATCC 27591 / A909 / CDC SS700)).